The sequence spans 829 residues: MKMTRRAFVKANAAASAAAVAGITLPASAANLIASSDQTKITWDKAPCRFCGTGCSVLVGTQNGKVVATQGDPEAPVNKGLNCIKGYFLSKIMYGQDRLTQPLLRMKDGKYHKDGEFTPVSWDVAFDTMAEKWKASLEKKGPTSVGMFGSGQWTVMEGYAAAKMMKAGFRSNNIDPNARHCMASAVVGFMRAFGIDEPMGCYDDFENADAFVLWGSNMAEMHPVLWTRITDRRLSHPHVRVNVLSTYYHRSFELADHGYIFNPQSDLAIANFIANYIIENDAVNWDFVNKHTNFTQADTDIGYGLRDDDPLQKAAKNPNSGKLTSISFEEYKKSVAPYTVEKASEISGVEKEKLIELAKQYADPNTKVMSLWTMGMNQHTRGVWMNNLVYNIHLLTGKIATPGNSPFSLTGQPSACGTAREVGTFAHRLPADMVVANPKHRQIAEKIWKLPEGTIPPKPGFHAVLQDRMLNDGVLNCYWVQCNNNMQAGPNINTERLPGYRNPENFIVVSDPYPTATAQAADLILPTAMWIEKEGAYGNAERRTQAWYQQVGTVGDAKSDLWQVMEFSKRFKMEEVWPEELLAKAPQYRGKTMYDMLFKNGQVDKFPLEEARELNDDSHHFGFYVQKGLFEEYATFGRGHGHDLAPYDVYHTVRGLRWPVVDGKETQWRFKEGSDPYAKAGSGWDFYGNADGKAKIISAPYEAPPEVPDSEFDLWLCTGRVLEHWHTGTMTRRVPELYKAVPDAVCYMHPEDAKARNVRRGEEVVIANKRGEVRVRVETRGRNRPPKGLVFVPFFDARILINKLILDATDPLSKQTDFKKCPVKITKVA.

The tat-type signal signal peptide spans methionine 1–alanine 30. In terms of domain architecture, 4Fe-4S Mo/W bis-MGD-type spans isoleucine 41–aspartate 97. Cysteine 48, cysteine 51, cysteine 55, and cysteine 83 together coordinate [4Fe-4S] cluster. Mo-bis(molybdopterin guanine dinucleotide) contacts are provided by residues lysine 85, glutamine 152, asparagine 177, cysteine 181, tryptophan 214 to methionine 221, serine 245 to histidine 249, glutamine 264 to aspartate 266, methionine 374, glutamine 378, asparagine 484, serine 510 to aspartate 511, lysine 533, aspartate 560, and threonine 718 to threonine 727. Phenylalanine 794 provides a ligand contact to substrate. Residues asparagine 802 and lysine 819 each contribute to the Mo-bis(molybdopterin guanine dinucleotide) site.

Belongs to the prokaryotic molybdopterin-containing oxidoreductase family. NasA/NapA/NarB subfamily. In terms of assembly, component of the periplasmic nitrate reductase NapAB complex composed of NapA and NapB. The cofactor is [4Fe-4S] cluster. Requires Mo-bis(molybdopterin guanine dinucleotide) as cofactor. In terms of processing, predicted to be exported by the Tat system. The position of the signal peptide cleavage has not been experimentally proven.

The protein resides in the periplasm. It carries out the reaction 2 Fe(II)-[cytochrome] + nitrate + 2 H(+) = 2 Fe(III)-[cytochrome] + nitrite + H2O. Its function is as follows. Catalytic subunit of the periplasmic nitrate reductase complex NapAB. Receives electrons from NapB and catalyzes the reduction of nitrate to nitrite. This is Periplasmic nitrate reductase from Vibrio parahaemolyticus serotype O3:K6 (strain RIMD 2210633).